The following is a 362-amino-acid chain: Endopolygalacturonase II (362 aa).

The signal sequence occupies residues 1–21 (MHSFASLLAYGLVAGATFASA). The propeptide occupies 22–27 (SPIEAR). A disulfide bridge links Cys-30 with Cys-45. Residues 156-186 (ANDITFTDVTINNADGDTQGGHNTDAFDVGN) form a PbH1 1 repeat. Asp-201 acts as the Proton donor in catalysis. An intrachain disulfide couples Cys-203 to Cys-219. 4 PbH1 repeats span residues 209–229 (GENI…SIGS), 238–259 (VKNV…RIKT), 267–289 (VSEI…VIQQ), and 301–322 (TNGV…DSGA). The active site involves His-223. A glycan (N-linked (GlcNAc...) (high mannose) asparagine) is linked at Asn-240. 2 disulfide bridges follow: Cys-329-Cys-334 and Cys-353-Cys-362.

Belongs to the glycosyl hydrolase 28 family.

The protein localises to the secreted. It catalyses the reaction (1,4-alpha-D-galacturonosyl)n+m + H2O = (1,4-alpha-D-galacturonosyl)n + (1,4-alpha-D-galacturonosyl)m.. In terms of biological role, involved in maceration and soft-rotting of plant tissue. Hydrolyzes the 1,4-alpha glycosidic bonds of de-esterified pectate in the smooth region of the plant cell wall. This chain is Endopolygalacturonase II (pgaII), found in Aspergillus niger (strain ATCC 1015 / CBS 113.46 / FGSC A1144 / LSHB Ac4 / NCTC 3858a / NRRL 328 / USDA 3528.7).